Here is a 306-residue protein sequence, read N- to C-terminus: Acetaldehyde dehydrogenase (306 aa).

12 to 15 (SGNI) lines the NAD(+) pocket. Cys-127 serves as the catalytic Acyl-thioester intermediate. Residues 158-166 (SAGPGTRAN) and Asn-277 each bind NAD(+).

The protein belongs to the acetaldehyde dehydrogenase family.

The enzyme catalyses acetaldehyde + NAD(+) + CoA = acetyl-CoA + NADH + H(+). The polypeptide is Acetaldehyde dehydrogenase (Mycolicibacterium gilvum (strain PYR-GCK) (Mycobacterium gilvum (strain PYR-GCK))).